The following is a 496-amino-acid chain: MVEADHPGKLFIGGLNRETNEKMLKAVFGKHGPISEVLLIKDRTSKSRGFAFITFENPADAKNAAKDMNGTSLHGKAIKVEQAKKPSFQSGGRRRPPASSRNRSPSGSLRSARGSSGGTRGWLPSHEGHLDDGGYTPDLKMSYSRGLIPVKRGPSSRSGGPPPKKSAPSAVARSNSWMGSQGPMSQRRENYGVPPRRATISSWRNDRMSTRHDGYATNDGNHPSCQETRDYAPPSRGYAYRDNGHSNRDEHSSRGYRNHRSSRETRDYAPPSRGHAYRDYGHSRRDESYSRGYRNHRSSRETREYAPPSRGHGYRDYGHSRRHESYSRGYRNHPSSRETRDYAPPHRDYAYRDYGHSSWDEHSSRGYSYHDGYGEALGRDHSEHLSGSSYRDALQRYGTSHGAPPARGPRMSYGGSTCHAYSNTRDRYGRSWESYSSCGDFHYCDREHVCRKDQRNPPSLGRVLPDPREAYGSSSYVASIVDGGESRSEKGDSSRY.

An RRM domain is found at 8 to 85; it reads GKLFIGGLNR…KAIKVEQAKK (78 aa). Disordered stretches follow at residues 81 to 345 and 452 to 496; these read EQAK…YAPP and KDQR…SSRY. Composition is skewed to low complexity over residues 97–114 and 149–159; these read PASS…SARG and PVKRGPSSRSG. The segment covering 175–184 has biased composition (polar residues); the sequence is NSWMGSQGPM. Basic and acidic residues-rich tracts occupy residues 204 to 214, 242 to 253, 276 to 289, 313 to 326, 335 to 345, and 484 to 496; these read RNDRMSTRHDG, DNGHSNRDEHSS, AYRD…DESY, GYRD…HESY, SSRETRDYAPP, and GESR…SSRY.

As to quaternary structure, interacts with splicing factor proteins SFRS3/SRP20, TRA2B/SFRS10, KHDRBS1/SAM68 and KHDRBS3. As to expression, testis-specific.

The protein resides in the nucleus. RNA-binding protein which may be involved in spermatogenesis. Required for sperm development, possibly by participating in pre-mRNA splicing in the testis. The protein is RNA-binding motif protein, Y chromosome, family 1 member F/J (RBMY1F) of Homo sapiens (Human).